The following is a 540-amino-acid chain: Beta-secretase (540 aa).

An N-terminal signal peptide occupies residues 1–31; it reads MHFSLPTSRIVVVVPAAAICIVCVLIETCTA. The region spanning 81–435 is the Peptidase A1 domain; sequence YYIEVDIGTP…DRENKRVGFA (355 aa). Catalysis depends on residues D99 and D302. 3 cysteine pairs are disulfide-bonded: C222-C439, C291-C469, and C345-C397. Residues 483–503 traverse the membrane as a helical segment; sequence ITAYVLAAICLVCLIPVIVFA. At 504–540 the chain is on the cytoplasmic side; the sequence is LTHQINKRCKGRRGRGVVNHHRLDQEGLAENEPNSDP.

The protein belongs to the peptidase A1 family.

The protein resides in the membrane. In Strongylocentrotus purpuratus (Purple sea urchin), this protein is Beta-secretase.